Here is a 480-residue protein sequence, read N- to C-terminus: Radical SAM Nalpha-GlyT isomerase (480 aa).

Iron-sulfur cluster contacts are provided by C125, C129, and C132. Residues 457–480 (KIVEPTPPEEDGGERKIIPITQID) are disordered.

It carries out the reaction 5-N(alpha)-glycyl-dTMP in DNA + AH2 + S-adenosyl-L-methionine = 5-C(alpha)-glycyl-dTMP in DNA + 5'-deoxyadenosine + L-methionine + A + H(+). Functionally, isomerizes 5-N-alpha-glycinylthymidine (Nalpha-GlyT) into 5-Calpha-glycinylthymidine (Calpha-GlyT) as a step in the pathway leading to thymidine hypermodifications in the viral genome. As a final result of the pathway of hypermodification, 5-aminoethyl-2'-deoxyuridine (5-NedU) substitutes for about 30% of thymidines in the viral DNA. These modifications probably prevent degradation of viral genome by the host restriction-modification antiviral defense system. In Pseudomonas phage M6, this protein is Radical SAM Nalpha-GlyT isomerase.